Reading from the N-terminus, the 57-residue chain is Andropin (57 aa).

The first 23 residues, 1-23 (MKYFVVLVVLALILAITVDPSDA), serve as a signal peptide directing secretion.

Belongs to the andropin family. In terms of tissue distribution, ejaculatory duct of adult males.

The protein resides in the secreted. Functionally, male-specific peptide with moderate activity against Gram-positive bacteria. This Drosophila sechellia (Fruit fly) protein is Andropin (Anp).